A 318-amino-acid chain; its full sequence is uncharacterized protein (318 aa).

This is an uncharacterized protein from Escherichia coli (strain K12).